We begin with the raw amino-acid sequence, 84 residues long: Small ribosomal subunit protein bS16 (84 aa).

It belongs to the bacterial ribosomal protein bS16 family.

This Endomicrobium trichonymphae protein is Small ribosomal subunit protein bS16.